Reading from the N-terminus, the 97-residue chain is Exodeoxyribonuclease 7 small subunit (97 aa).

Residues 1-21 (MAKTATPGACASDPGSGPLPE) form a disordered region.

Belongs to the XseB family. In terms of assembly, heterooligomer composed of large and small subunits.

It is found in the cytoplasm. The enzyme catalyses Exonucleolytic cleavage in either 5'- to 3'- or 3'- to 5'-direction to yield nucleoside 5'-phosphates.. Its function is as follows. Bidirectionally degrades single-stranded DNA into large acid-insoluble oligonucleotides, which are then degraded further into small acid-soluble oligonucleotides. The protein is Exodeoxyribonuclease 7 small subunit of Burkholderia mallei (strain NCTC 10247).